A 62-amino-acid polypeptide reads, in one-letter code: Single-pass membrane and coiled-coil domain-containing protein 4 homolog (62 aa).

The segment at 1 to 27 (MRQLPGKAAKETRKMKRERKQQNKEGH) is disordered. Positions 9–31 (AKETRKMKRERKQQNKEGHNRVV) form a coiled coil. Residues 30-50 (VVTVAIPVCLAVFVMLIVYVY) traverse the membrane as a helical segment.

Belongs to the SMCO4 family.

It is found in the membrane. This chain is Single-pass membrane and coiled-coil domain-containing protein 4 homolog, found in Nematostella vectensis (Starlet sea anemone).